Here is a 422-residue protein sequence, read N- to C-terminus: Serine--tRNA ligase (422 aa).

The segment at M1 to R20 is disordered. An L-serine-binding site is contributed by T229–E231. ATP is bound at residue R260–E262. E283 contacts L-serine. Residue E347–S350 coordinates ATP. Position 383 (S383) interacts with L-serine.

This sequence belongs to the class-II aminoacyl-tRNA synthetase family. Type-1 seryl-tRNA synthetase subfamily. As to quaternary structure, homodimer. The tRNA molecule binds across the dimer.

It localises to the cytoplasm. The catalysed reaction is tRNA(Ser) + L-serine + ATP = L-seryl-tRNA(Ser) + AMP + diphosphate + H(+). The enzyme catalyses tRNA(Sec) + L-serine + ATP = L-seryl-tRNA(Sec) + AMP + diphosphate + H(+). The protein operates within aminoacyl-tRNA biosynthesis; selenocysteinyl-tRNA(Sec) biosynthesis; L-seryl-tRNA(Sec) from L-serine and tRNA(Sec): step 1/1. In terms of biological role, catalyzes the attachment of serine to tRNA(Ser). Is also able to aminoacylate tRNA(Sec) with serine, to form the misacylated tRNA L-seryl-tRNA(Sec), which will be further converted into selenocysteinyl-tRNA(Sec). The chain is Serine--tRNA ligase from Paramagnetospirillum magneticum (strain ATCC 700264 / AMB-1) (Magnetospirillum magneticum).